Consider the following 153-residue polypeptide: MSLIPSIFGGRRSNVFDPFSLDVWDPFKDFHFPTSLSAENSAFVNTRVDWKETPEAHVFEADIPGLKKEEVKVQIEDDRVLQISGERNLEKEDKNDTWHRVERSSGNFMRRFRLPENAKVEQVKASMENGVLTVTVPKEEVKKPDVKAIEISG.

The sHSP domain maps to 39–153 (ENSAFVNTRV…PDVKAIEISG (115 aa)).

It belongs to the small heat shock protein (HSP20) family. In terms of assembly, forms oligomeric structures.

The protein localises to the cytoplasm. The sequence is that of 17.5 kDa class I heat shock protein (HSP17.5-M) from Glycine max (Soybean).